Reading from the N-terminus, the 185-residue chain is Elongation factor P (185 aa).

This sequence belongs to the elongation factor P family.

Its subcellular location is the cytoplasm. The protein operates within protein biosynthesis; polypeptide chain elongation. Its function is as follows. Involved in peptide bond synthesis. Stimulates efficient translation and peptide-bond synthesis on native or reconstituted 70S ribosomes in vitro. Probably functions indirectly by altering the affinity of the ribosome for aminoacyl-tRNA, thus increasing their reactivity as acceptors for peptidyl transferase. The protein is Elongation factor P of Dictyoglomus turgidum (strain DSM 6724 / Z-1310).